We begin with the raw amino-acid sequence, 280 residues long: Energy-coupling factor transporter ATP-binding protein EcfA2 (280 aa).

Residues 3-245 (ISLENVSYTY…VAFLKEKQLG (243 aa)) enclose the ABC transporter domain. An ATP-binding site is contributed by 40-47 (GHTGSGKS).

This sequence belongs to the ABC transporter superfamily. Energy-coupling factor EcfA family. As to quaternary structure, forms a stable energy-coupling factor (ECF) transporter complex composed of 2 membrane-embedded substrate-binding proteins (S component), 2 ATP-binding proteins (A component) and 2 transmembrane proteins (T component).

The protein localises to the cell membrane. Functionally, ATP-binding (A) component of a common energy-coupling factor (ECF) ABC-transporter complex. Unlike classic ABC transporters this ECF transporter provides the energy necessary to transport a number of different substrates. This is Energy-coupling factor transporter ATP-binding protein EcfA2 from Streptococcus thermophilus (strain CNRZ 1066).